Reading from the N-terminus, the 219-residue chain is Cytochrome b6 (219 aa).

The helical transmembrane segment at 32-52 (IFYCFGGIVLTAFIFQGASGF) threads the bilayer. Cys35 provides a ligand contact to heme c. Residues His86 and His100 each contribute to the heme b site. Helical transmembrane passes span 90 to 110 (SGCM…TGGF), 116 to 136 (LTWI…VTGY), and 190 to 210 (IHTF…FSLL). His191 and His206 together coordinate heme b.

This sequence belongs to the cytochrome b family. PetB subfamily. The 4 large subunits of the cytochrome b6-f complex are cytochrome b6, subunit IV (17 kDa polypeptide, PetD), cytochrome f and the Rieske protein, while the 4 small subunits are PetG, PetL, PetM and PetN. The complex functions as a dimer. Heme b serves as cofactor. It depends on heme c as a cofactor.

The protein resides in the plastid. It is found in the chloroplast thylakoid membrane. Functionally, component of the cytochrome b6-f complex, which mediates electron transfer between photosystem II (PSII) and photosystem I (PSI), cyclic electron flow around PSI, and state transitions. This chain is Cytochrome b6, found in Heterocapsa triquetra (Dinoflagellate).